A 367-amino-acid chain; its full sequence is Heme A synthase (367 aa).

5 helical membrane-spanning segments follow: residues 25–45, 111–131, 139–159, 174–194, and 210–230; these read ALRF…LVGG, LIAR…WLTG, WPLV…WWMV, LATH…IMRG, and GFAA…ALVA. His274 is a binding site for heme. The next 3 helical transmembrane spans lie at 276 to 296, 305 to 325, and 327 to 347; these read IGAY…LRAA, AILL…TLLM, and VPLH…GFAV. His335 contacts heme.

The protein belongs to the COX15/CtaA family. Type 2 subfamily. Interacts with CtaB. The cofactor is heme b.

It localises to the cell membrane. It carries out the reaction Fe(II)-heme o + 2 A + H2O = Fe(II)-heme a + 2 AH2. It functions in the pathway porphyrin-containing compound metabolism; heme A biosynthesis; heme A from heme O: step 1/1. Catalyzes the conversion of heme O to heme A by two successive hydroxylations of the methyl group at C8. The first hydroxylation forms heme I, the second hydroxylation results in an unstable dihydroxymethyl group, which spontaneously dehydrates, resulting in the formyl group of heme A. This Rhizobium johnstonii (strain DSM 114642 / LMG 32736 / 3841) (Rhizobium leguminosarum bv. viciae) protein is Heme A synthase.